The chain runs to 400 residues: MGFITKAIPLALAAASVINGAEILETRAGVQTLADKYIVVMNDGISDKDFDSHRSWVNRNHRRRLIRRGAKAMGGMKHTYNFPTGLKGYSGHFDEQMINEISKRADVKYIERDARVQINAIEQQDNVPSWGLARVGSKEPGGTTYYYDSTAGEGSTAYVIDTGTDIQHEEFEGRATWGANFVDDMDMDCNGHGTHVSGTIGGKTFGVAKKSNVVAVKVLDCNGSGSNSGVIMGMEWATKDAQQKGADKAVANMSLGGAFSQASNDAAAAIAKGGVFLAVAAGNDNVDAADSSPASEPSICTIAASTEQDSKADFSNFGQVVDVYAPGDSITSAKPGGGSQVLSGISMATPHVAGLGAYLIGLGKGGGPGLCDTIKQMAIDVIQNPGASTTSKLINNGSGM.

An N-terminal signal peptide occupies residues 1 to 20 (MGFITKAIPLALAAASVING). Positions 21–119 (AEILETRAGV…IERDARVQIN (99 aa)) are excised as a propeptide. Residues 36–118 (KYIVVMNDGI…YIERDARVQI (83 aa)) enclose the Inhibitor I9 domain. Residues 129 to 400 (SWGLARVGSK…SKLINNGSGM (272 aa)) enclose the Peptidase S8 domain. Catalysis depends on charge relay system residues Asp161 and His192. 2 N-linked (GlcNAc...) asparagine glycosylation sites follow: Asn222 and Asn252. Ser346 functions as the Charge relay system in the catalytic mechanism. Residue Asn396 is glycosylated (N-linked (GlcNAc...) asparagine).

Belongs to the peptidase S8 family.

The protein resides in the secreted. Functionally, secreted subtilisin-like serine protease with keratinolytic activity that contributes to pathogenicity. In Trichophyton soudanense, this protein is Subtilisin-like protease 7 (SUB7).